An 85-amino-acid polypeptide reads, in one-letter code: Large ribosomal subunit protein bL27 (85 aa).

Positions 1–22 (MAHKKAGGSSRNGRDSHSKRLG) are disordered.

Belongs to the bacterial ribosomal protein bL27 family.

The sequence is that of Large ribosomal subunit protein bL27 from Nitrosomonas europaea (strain ATCC 19718 / CIP 103999 / KCTC 2705 / NBRC 14298).